A 1216-amino-acid polypeptide reads, in one-letter code: RAB11-binding protein RELCH (1216 aa).

Disordered regions lie at residues 1–73 (MAAM…GLPG) and 135–177 (GNFE…QLNR). N-acetylalanine is present on Ala-2. 2 positions are modified to phosphoserine: Ser-20 and Ser-22. Over residues 21–31 (DSDEDDDEVAA) the composition is skewed to acidic residues. Phosphothreonine is present on Thr-32. Residues Ser-54 and Ser-56 each carry the phosphoserine modification. Gly residues predominate over residues 148–163 (GAPGVPGAAGVGGAGG). Phosphoserine is present on residues Ser-180 and Ser-182. Phosphothreonine is present on Thr-183. The residue at position 186 (Ser-186) is a Phosphoserine. Positions 197–231 (NRETDEKVAVLEFELRKAKETIQALRANLTKAAEH) form a coiled coil. Residues 255-287 (EKRALNFLVNEFLLKNNYKLTSITFSDENDDQD) form the LisH domain. Residues 359 to 397 (VQKLEDKISLLNSEKWSLMEQIRRLKSEMDFLKNEHFAI) are a coiled coil. Phosphoserine is present on Ser-385. The tract at residues 401–477 (CDSVQPPLDQ…SSLSSKKTVH (77 aa)) is disordered. Positions 411–435 (LPHKDSEDSGQHPDVNSSDKGKNTD) are enriched in basic and acidic residues. Residue Ser-453 is modified to Phosphoserine. The segment at 497-779 (CRMSADSRLG…SSKAKLHGEV (283 aa)) is interaction with RAB11A and RAB11B. HEAT repeat units lie at residues 601-639 (LLPQ…RSSL) and 640-679 (VLSM…KYHQ). At Ser-792 the chain carries Phosphoserine. The HEAT 3 repeat unit spans residues 1004-1042 (VAPALVTLSSDPEFSVRIATIPAFGTIMETVIQRELLER). At Ser-1149 the chain carries Phosphoserine.

The protein resides in the recycling endosome. The protein localises to the golgi apparatus. Its subcellular location is the trans-Golgi network. Functionally, regulates intracellular cholesterol distribution from recycling endosomes to the trans-Golgi network through interactions with RAB11 and OSBP. Functions in membrane tethering and promotes OSBP-mediated cholesterol transfer between RAB11-bound recycling endosomes and OSBP-bound Golgi-like membranes. The chain is RAB11-binding protein RELCH from Homo sapiens (Human).